A 422-amino-acid polypeptide reads, in one-letter code: Protein UmuC (422 aa).

Residues 2 to 188 enclose the UmuC domain; the sequence is FALCDVNAFY…LPVDDVWGIG (187 aa).

Belongs to the DNA polymerase type-Y family.

In terms of biological role, involved in UV protection and mutation. Poorly processive, error-prone DNA polymerase involved in translesion repair. Essential for induced (or SOS) mutagenesis. Able to replicate DNA across DNA lesions (thymine photodimers and abasic sites, translesion synthesis) in the presence of activated RecA; efficiency is maximal in the presence of the beta sliding-clamp and clamp-loading complex of DNA polymerase III plus single-stranded binding protein (SSB). RecA and to a lesser extent the beta clamp-complex may target Pol V to replication complexes stalled at DNA template lesions. In Escherichia coli (strain K12), this protein is Protein UmuC (umuC).